A 422-amino-acid polypeptide reads, in one-letter code: Elongation factor 1-gamma (422 aa).

A GST N-terminal domain is found at 1–82; the sequence is MALVLHAGKT…YVARLKADNP (82 aa). Residues 87–215 form the GST C-terminal domain; that stretch reads SLIDYAHIEQ…VKQTESVPPV (129 aa). The interval 210-269 is disordered; that stretch reads ESVPPVPSAKKPSQPKETKSKAKEEPKKEAKKEPAKPKAEAAEEVEEAPKPKPKNPLDLL. Residues 223–250 are compositionally biased toward basic and acidic residues; sequence QPKETKSKAKEEPKKEAKKEPAKPKAEA. In terms of domain architecture, EF-1-gamma C-terminal spans 262 to 422; it reads PKNPLDLLPP…EALLDAKCFK (161 aa).

In terms of assembly, EF-1 is composed of four subunits: alpha, beta, delta, and gamma.

Probably plays a role in anchoring the complex to other cellular components. This is Elongation factor 1-gamma from Prunus avium (Cherry).